The primary structure comprises 229 residues: UPF0173 metal-dependent hydrolase SAB1566c (229 aa).

This sequence belongs to the UPF0173 family.

This Staphylococcus aureus (strain bovine RF122 / ET3-1) protein is UPF0173 metal-dependent hydrolase SAB1566c.